The following is a 454-amino-acid chain: F-box/WD-40 repeat-containing protein At3g52030 (454 aa).

An F-box domain is found at 20-66; it reads PTSIESLDADILCIIFSFLDLFDLVHCTVVCNSWNAVIKRLKLLQAS. WD repeat units follow at residues 85–116, 117–153, 170–214, 215–255, 258–296, 301–340, 343–383, and 422–454; these read DRPA…RWEA, HSHR…CMEE, SKKL…SIFP, SRAG…CSQI, TQGG…PVAT, ITAG…RLWE, VSPN…VLSR, and KVRP…FNLS.

The protein is F-box/WD-40 repeat-containing protein At3g52030 of Arabidopsis thaliana (Mouse-ear cress).